The primary structure comprises 292 residues: Glycine--tRNA ligase alpha subunit (292 aa).

It belongs to the class-II aminoacyl-tRNA synthetase family. Tetramer of two alpha and two beta subunits.

It localises to the cytoplasm. The enzyme catalyses tRNA(Gly) + glycine + ATP = glycyl-tRNA(Gly) + AMP + diphosphate. The polypeptide is Glycine--tRNA ligase alpha subunit (Desulfovibrio desulfuricans (strain ATCC 27774 / DSM 6949 / MB)).